The chain runs to 185 residues: Lysozyme g (185 aa).

Gln-1 is modified (pyrrolidone carboxylic acid). 2 cysteine pairs are disulfide-bonded: Cys-4–Cys-60 and Cys-18–Cys-29. Catalysis depends on residues Glu-73 and Asp-86.

This sequence belongs to the glycosyl hydrolase 23 family.

Its subcellular location is the secreted. The enzyme catalyses Hydrolysis of (1-&gt;4)-beta-linkages between N-acetylmuramic acid and N-acetyl-D-glucosamine residues in a peptidoglycan and between N-acetyl-D-glucosamine residues in chitodextrins.. This Casuarius casuarius (Southern cassowary) protein is Lysozyme g.